Consider the following 149-residue polypeptide: UPF0179 protein MA_3685 (149 aa).

This sequence belongs to the UPF0179 family.

The polypeptide is UPF0179 protein MA_3685 (Methanosarcina acetivorans (strain ATCC 35395 / DSM 2834 / JCM 12185 / C2A)).